The following is a 463-amino-acid chain: Methionine aminopeptidase 2-2 (463 aa).

A disordered region spans residues 1–107; the sequence is MGAKTFEGGD…VPLSQLFPDG (107 aa). A compositionally biased stretch (acidic residues) spans 37 to 53; sequence EDGDGEFGTDDDDDGDG. Positions 69 to 83 are enriched in basic residues; that stretch reads PKKRKRSKKKKSNKK. H215 serves as a coordination point for substrate. D236, D247, and H316 together coordinate a divalent metal cation. H324 lines the substrate pocket. A divalent metal cation-binding residues include E349 and E444.

It belongs to the peptidase M24A family. Methionine aminopeptidase eukaryotic type 2 subfamily. Co(2+) is required as a cofactor. Zn(2+) serves as cofactor. Requires Mn(2+) as cofactor. It depends on Fe(2+) as a cofactor.

Its subcellular location is the cytoplasm. It carries out the reaction Release of N-terminal amino acids, preferentially methionine, from peptides and arylamides.. In terms of biological role, cotranslationally removes the N-terminal methionine from nascent proteins. The N-terminal methionine is often cleaved when the second residue in the primary sequence is small and uncharged (Met-Ala-, Cys, Gly, Pro, Ser, Thr, or Val). The polypeptide is Methionine aminopeptidase 2-2 (Talaromyces marneffei (strain ATCC 18224 / CBS 334.59 / QM 7333) (Penicillium marneffei)).